A 395-amino-acid chain; its full sequence is Acetate kinase (395 aa).

Asn-7 contacts Mg(2+). ATP is bound at residue Lys-14. Residue Arg-92 participates in substrate binding. Catalysis depends on Asp-149, which acts as the Proton donor/acceptor. ATP contacts are provided by residues 207 to 211, 282 to 284, and 329 to 333; these read HLGNG, DMR, and GIGEN. Glu-382 contacts Mg(2+).

This sequence belongs to the acetokinase family. In terms of assembly, homodimer. Mg(2+) is required as a cofactor. Mn(2+) serves as cofactor.

Its subcellular location is the cytoplasm. The enzyme catalyses acetate + ATP = acetyl phosphate + ADP. Its pathway is metabolic intermediate biosynthesis; acetyl-CoA biosynthesis; acetyl-CoA from acetate: step 1/2. Functionally, catalyzes the formation of acetyl phosphate from acetate and ATP. Can also catalyze the reverse reaction. The protein is Acetate kinase of Brachyspira hyodysenteriae (strain ATCC 49526 / WA1).